A 372-amino-acid chain; its full sequence is Partitioning defective 6 homolog beta (372 aa).

Ser11 is modified (phosphoserine). The PB1 domain occupies 16–96; that stretch reads TMEVKSKFGA…PLLRIFIQKK (81 aa). Positions 126-253 are interaction with PARD3 and CDC42; it reads RKKPHIVISM…ITVRPANQRN (128 aa). One can recognise a Pseudo-CRIB domain in the interval 133-150; the sequence is ISMPQDFRPVSSIIDVDI. The PDZ domain maps to 157 to 250; sequence RVRLYKYGTE…NLIITVRPAN (94 aa). Polar residues predominate over residues 253-272; it reads NNVVRNSRTSGSSGQSTDNS. The tract at residues 253–292 is disordered; that stretch reads NNVVRNSRTSGSSGQSTDNSLLGYPQQIEPSFEPEDEDSE.

Belongs to the PAR6 family. As to quaternary structure, interacts with PARD3. Interacts with GTP-bound forms of CDC42 and RAC1. Interacts with GTP-bound RHOQ/TC10. Interacts with PALS1. Interacts with the N-terminal part of PRKCI and PRKCZ. Part of a complex with PARD3, CDC42 or RAC1 and PRKCI or PRKCZ. Part of a complex with LLGL1 and PRKCI. Interacts with PARD3B. Interacts with ECT2. In terms of tissue distribution, expressed in pancreas and in both adult and fetal kidney. Weakly expressed in placenta and lung. Not expressed in other tissues.

Its subcellular location is the cytoplasm. The protein localises to the cell membrane. It localises to the cell junction. The protein resides in the tight junction. Functionally, adapter protein involved in asymmetrical cell division and cell polarization processes. Probably involved in formation of epithelial tight junctions. Association with PARD3 may prevent the interaction of PARD3 with F11R/JAM1, thereby preventing tight junction assembly. The PARD6-PARD3 complex links GTP-bound Rho small GTPases to atypical protein kinase C proteins. This Homo sapiens (Human) protein is Partitioning defective 6 homolog beta (PARD6B).